An 827-amino-acid polypeptide reads, in one-letter code: Xanthomonalisin (827 aa).

A signal peptide spans 1 to 23 (MKIEKTALTVAIALAMSSLSAHA). Residues 24 to 237 (EDAWVSTHTQ…GPNVGTQAAA (214 aa)) constitute a propeptide, removed in mature form. The 385-residue stretch at 241-625 (AHHPQDFAAI…GKLNTYAQAN (385 aa)) folds into the Peptidase S53 domain. Catalysis depends on charge relay system residues glutamate 312, aspartate 316, and serine 544. Aspartate 585, valine 586, alanine 601, glycine 603, and aspartate 605 together coordinate Ca(2+). Residues 635 to 722 (TNAPPVANFS…VTVSSSGGTG (88 aa)) enclose the PKD domain. Positions 636–827 (NAPPVANFSV…GVSLKATWTN (192 aa)) are cleaved as a propeptide — removed in mature form.

It depends on Ca(2+) as a cofactor. Post-translationally, autocatalytically processed.

It localises to the secreted. It catalyses the reaction Cleavage of casein.. Its activity is regulated as follows. Inhibited by 1,2-epoxy-3-(p-nitrophenoxy)propane (EPNP), but not by pepstatin, pepstatin Ac (S-PI) and diazoacetyl-DL-norleucine methyl ester (DAN). Not inhibited by metal ions. Functionally, pepstatin-insensitive serine-carboxyl proteinase. Shows activity on acid-denatured hemoglobin and on casein. The chain is Xanthomonalisin from Xanthomonas sp. (strain T-22).